Here is an 82-residue protein sequence, read N- to C-terminus: Sec-independent protein translocase protein TatA (82 aa).

A helical membrane pass occupies residues M1–G21. The tract at residues V43 to D82 is disordered.

The protein belongs to the TatA/E family. As to quaternary structure, the Tat system comprises two distinct complexes: a TatABC complex, containing multiple copies of TatA, TatB and TatC subunits, and a separate TatA complex, containing only TatA subunits. Substrates initially bind to the TatABC complex, which probably triggers association of the separate TatA complex to form the active translocon.

The protein resides in the cell inner membrane. Part of the twin-arginine translocation (Tat) system that transports large folded proteins containing a characteristic twin-arginine motif in their signal peptide across membranes. TatA could form the protein-conducting channel of the Tat system. In Pseudomonas paraeruginosa (strain DSM 24068 / PA7) (Pseudomonas aeruginosa (strain PA7)), this protein is Sec-independent protein translocase protein TatA.